Consider the following 1093-residue polypeptide: Atos homolog protein A (1093 aa).

Residues 29 to 37 (ALLITEGRT) form a transactivation domain 1 (TAD1) region. Disordered regions lie at residues 396 to 479 (AGRP…GNPL), 558 to 579 (SSKSKLKTPDTPISPRLDGESK), and 746 to 788 (HDNF…GSMR). A compositionally biased stretch (basic and acidic residues) spans 746–763 (HDNFKNKNRQDKTKAAHD). Residues 895-952 (LLGNFEESVLNFRLDPLGIVEGFTAEVGASGVFCPTHMTLPVEVSFYSVSDDNAPSPY) form a required for macropage invasion region. A transactivation domain 2 (TAD2) region spans residues 979–987 (FNPNKTVVK).

Belongs to the ATOS family.

It localises to the nucleus. In terms of biological role, transcription regulator that syncronizes transcriptional and translational programs to promote macrophage invasion of tissues. The protein is Atos homolog protein A (ATOSA) of Gallus gallus (Chicken).